The sequence spans 476 residues: Cysteine--tRNA ligase (476 aa).

Zn(2+) is bound at residue cysteine 36. The 'HIGH' region signature appears at 38–48 (PTVYDYAHIGN). Residues cysteine 221, histidine 246, and glutamate 250 each coordinate Zn(2+). A 'KMSKS' region motif is present at residues 278–282 (KMSKS). Lysine 281 contacts ATP.

The protein belongs to the class-I aminoacyl-tRNA synthetase family. Monomer. It depends on Zn(2+) as a cofactor.

The protein localises to the cytoplasm. It carries out the reaction tRNA(Cys) + L-cysteine + ATP = L-cysteinyl-tRNA(Cys) + AMP + diphosphate. The sequence is that of Cysteine--tRNA ligase from Chlamydia abortus (strain DSM 27085 / S26/3) (Chlamydophila abortus).